Consider the following 122-residue polypeptide: Large ribosomal subunit protein uL18 (122 aa).

This sequence belongs to the universal ribosomal protein uL18 family. Part of the 50S ribosomal subunit; part of the 5S rRNA/L5/L18/L25 subcomplex. Contacts the 5S and 23S rRNAs.

In terms of biological role, this is one of the proteins that bind and probably mediate the attachment of the 5S RNA into the large ribosomal subunit, where it forms part of the central protuberance. This is Large ribosomal subunit protein uL18 from Hydrogenobaculum sp. (strain Y04AAS1).